The primary structure comprises 107 residues: uncharacterized protein (107 aa).

This is an uncharacterized protein from Acidianus convivator (ABV).